The sequence spans 201 residues: Testis-expressed protein 38 (201 aa).

The chain crosses the membrane as a helical span at residues Ile3 to Phe23.

The protein resides in the membrane. The protein is Testis-expressed protein 38 (Tex38) of Mus musculus (Mouse).